Reading from the N-terminus, the 764-residue chain is MYTGATTYVVGFPRIGEQRELKKVLERYWDQKTSFSEIDEIAKNLRRRHWLYQKEAGISFISSNDFSLYDNMLDTAIMLNAVPERFSNIHDKQELYFAMARGTNNTVAMEMTKWFNTNYHYIVPELSDTMNFSLCADKIINEYREAKEYGLRTKINLIGPITFLSLSKPVDGNQDTLELLPKILPCYVSLLKKIADLDDEVYIQFDEPIVVKDIDRRTLNLFYLCYKELSNVSNRLRLIVMTYFDHAVEAVKILSDIPIYGIGLDFVYGQENLKVLDSLNGKKLIAGVIDGRNIWKNNYHNTLTLLKDIEKNVKKEDIILSTTCSLLHVPYSLKHENHLDKDIKSWMSFAREKLDELSDLAKLFFVENNSEDILTILENNQRIFREKQQSSKVIDPIVRERVGNIKRRERDGSFNDRNEAQRKKLDLPLLPTTTIGSFPQTEEIRKLRRDFKNNVISQIEYDTGIKNYIDSCIQFQEDIGLDVLVHGEPERNDMVEYFGERLSGFVFTQNGWVQSYGSRCVKPTVIFGDVSRPKPMTIDTILYAKSKTNKIVKGMLTGPVTILNWSYCRSDMERSAVCEQIALAIRDEINDLQKAGIKIIQVDEAAFKEGYPLRKEKVAYYENWAVKSFKLAVSSAAIETQIHTHMCYSDFNDIIHTIEKMDADVITIETSRSGNKLLTVFATRGYKNEIGPGIYDIHSPRVPSVEELEEKIRNLMLVLPPSKLWINPDCGLKTRKWDEIRWSLSNMVKAAQHIRLGLQRVMFV.

5-methyltetrahydropteroyltri-L-glutamate contacts are provided by residues 19–22 (RELK) and Lys113. Residues 435–437 (IGS) and Glu488 each bind L-homocysteine. L-methionine is bound by residues 435–437 (IGS) and Glu488. 5-methyltetrahydropteroyltri-L-glutamate contacts are provided by residues 519–520 (RC) and Trp565. Asp603 provides a ligand contact to L-homocysteine. Residue Asp603 participates in L-methionine binding. Glu609 is a 5-methyltetrahydropteroyltri-L-glutamate binding site. Positions 645, 647, and 669 each coordinate Zn(2+). The active-site Proton donor is His698. Cys730 is a binding site for Zn(2+).

The protein belongs to the vitamin-B12 independent methionine synthase family. The cofactor is Zn(2+).

The enzyme catalyses 5-methyltetrahydropteroyltri-L-glutamate + L-homocysteine = tetrahydropteroyltri-L-glutamate + L-methionine. Its pathway is amino-acid biosynthesis; L-methionine biosynthesis via de novo pathway; L-methionine from L-homocysteine (MetE route): step 1/1. Functionally, catalyzes the transfer of a methyl group from 5-methyltetrahydrofolate to homocysteine resulting in methionine formation. The chain is 5-methyltetrahydropteroyltriglutamate--homocysteine methyltransferase from Desulforamulus reducens (strain ATCC BAA-1160 / DSM 100696 / MI-1) (Desulfotomaculum reducens).